A 65-amino-acid polypeptide reads, in one-letter code: Hirudin-3A (65 aa).

The interaction with thrombin active site stretch occupies residues 1–3; sequence VVY. 3 disulfides stabilise this stretch: C6–C14, C16–C28, and C22–C39. The disordered stretch occupies residues 39–65; that stretch reads CVTGEGTPKPQSHNDGDFEEIPEEYLQ. Residue T45 is glycosylated (O-linked (GalNAc...) threonine). Positions 55–65 are interaction with fibrinogen-binding exosite of thrombin; that stretch reads DFEEIPEEYLQ. Acidic residues predominate over residues 55–65; the sequence is DFEEIPEEYLQ. Residue Y63 is modified to Sulfotyrosine.

Belongs to the protease inhibitor I14 (hirudin) family.

Its subcellular location is the secreted. In terms of biological role, hirudin is a potent thrombin-specific protease inhibitor. It forms a stable non-covalent complex with alpha-thrombin, thereby abolishing its ability to cleave fibrinogen. This is Hirudin-3A from Hirudo medicinalis (Medicinal leech).